A 341-amino-acid chain; its full sequence is Trace amine-associated receptor 13c (341 aa).

Residues Met-1–Val-34 are Extracellular-facing. N-linked (GlcNAc...) asparagine glycosylation is present at Asn-19. Cystine bridges form between Cys-22-Cys-186 and Cys-105-Cys-186. A helical membrane pass occupies residues Val-35–Ile-55. The Cytoplasmic portion of the chain corresponds to Ser-56 to Asn-68. Residues Ile-69–Ser-89 traverse the membrane as a helical segment. Residues Met-90–Cys-105 are Extracellular-facing. A helical membrane pass occupies residues Leu-106–Ile-126. Over Ala-127 to Pro-147 the chain is Cytoplasmic. Residues Val-148–Val-168 form a helical membrane-spanning segment. Topologically, residues Tyr-169–Asn-195 are extracellular. A helical membrane pass occupies residues Ala-196 to Ala-219. The Cytoplasmic segment spans residues Arg-220–Thr-257. The chain crosses the membrane as a helical span at residues Leu-258 to Val-278. Over Asp-279 to Asp-292 the chain is Extracellular. Asn-283 carries N-linked (GlcNAc...) asparagine glycosylation. A helical transmembrane segment spans residues Ala-293–Tyr-313. The Cytoplasmic portion of the chain corresponds to Pro-314–Val-341.

This sequence belongs to the G-protein coupled receptor 1 family. Expressed in olfactory epithelium (at protein level). Detected in a sparse population of olfactory sensory neurons.

The protein resides in the cell membrane. Olfactory receptor for medium length odd-chained diamines including cadaverine which is generated by bacterial decarboxylation of the basic amino acid lysine and contributes to the odor of decomposing tissue. Mediates pronounced innate aversion behavior to cadaverine. This chain is Trace amine-associated receptor 13c, found in Danio rerio (Zebrafish).